A 267-amino-acid chain; its full sequence is Tetrahydromethanopterin S-methyltransferase subunit C (267 aa).

7 helical membrane-spanning segments follow: residues 19–39, 75–95, 97–117, 140–160, 162–182, 198–218, and 221–241; these read IMALGIVGGLVGIYLGNFAPP, IGMLALGMGILAALFGLSVGG, AGPIVAIVVAAIIGGVIGALA, TLVILGLSVVIAGSFDFASVV, YVVANGYIALIFIIGGMGILH, LMLAVEKGAIALIIAGFASSL, and GLMAAGLNMLIGIIIWYVAFS.

It belongs to the MtrC family. As to quaternary structure, the complex is composed of 8 subunits; MtrA, MtrB, MtrC, MtrD, MtrE, MtrF, MtrG and MtrH.

The protein resides in the cell membrane. The enzyme catalyses 5-methyl-5,6,7,8-tetrahydromethanopterin + coenzyme M + 2 Na(+)(in) = 5,6,7,8-tetrahydromethanopterin + methyl-coenzyme M + 2 Na(+)(out). It participates in one-carbon metabolism; methanogenesis from CO(2); methyl-coenzyme M from 5,10-methylene-5,6,7,8-tetrahydromethanopterin: step 2/2. Functionally, part of a complex that catalyzes the formation of methyl-coenzyme M and tetrahydromethanopterin from coenzyme M and methyl-tetrahydromethanopterin. This is an energy-conserving, sodium-ion translocating step. The chain is Tetrahydromethanopterin S-methyltransferase subunit C from Methanosarcina barkeri (strain Fusaro / DSM 804).